The sequence spans 420 residues: Gamma-glutamyl phosphate reductase (420 aa).

This sequence belongs to the gamma-glutamyl phosphate reductase family.

Its subcellular location is the cytoplasm. The catalysed reaction is L-glutamate 5-semialdehyde + phosphate + NADP(+) = L-glutamyl 5-phosphate + NADPH + H(+). Its pathway is amino-acid biosynthesis; L-proline biosynthesis; L-glutamate 5-semialdehyde from L-glutamate: step 2/2. In terms of biological role, catalyzes the NADPH-dependent reduction of L-glutamate 5-phosphate into L-glutamate 5-semialdehyde and phosphate. The product spontaneously undergoes cyclization to form 1-pyrroline-5-carboxylate. In Neisseria meningitidis serogroup C (strain 053442), this protein is Gamma-glutamyl phosphate reductase.